We begin with the raw amino-acid sequence, 526 residues long: Microphthalmia-associated transcription factor (526 aa).

Residues 20-54 (EPKTYYELKSQPLKSSSSAEHSGASKPPLSSSTMT) are disordered. A compositionally biased stretch (low complexity) spans 34-44 (SSSSAEHSGAS). S180 is modified (phosphoserine; by MAPK). K289 is covalently cross-linked (Glycyl lysine isopeptide (Lys-Gly) (interchain with G-Cter in SUMO)). The bHLH domain occupies 311–364 (QKKDNHNLIERRRRFNINDRIKELGTLIPKSNDPDMRWNKGTILKASVDYIRKL). Positions 355 to 401 (KASVDYIRKLQREQQRAKDLENRQKKLEHANRHLLLRVQELEMQARA) form a coiled coil. The leucine-zipper stretch occupies residues 374–395 (LENRQKKLEHANRHLLLRVQEL). S405 carries the post-translational modification Phosphoserine; by GSK3. Residue S414 is modified to Phosphoserine. K423 participates in a covalent cross-link: Glycyl lysine isopeptide (Lys-Gly) (interchain with G-Cter in SUMO). The residue at position 491 (S491) is a Phosphoserine. The disordered stretch occupies residues 496-526 (TDPLLSSVSPGASKTSSRRSSMSAEETEHAC). A compositionally biased stretch (low complexity) spans 507 to 519 (ASKTSSRRSSMSA). Residue S516 is modified to Phosphoserine; by RPS6KA1.

Belongs to the MiT/TFE family. Homodimer or heterodimer; dimerization is mediated via the coiled coil region. Efficient DNA binding requires dimerization with another bHLH protein. Binds DNA in the form of homodimer or heterodimer with either TFE3, TFEB or TFEC. Identified in a complex with HINT1 and CTNNB1. Interacts with KARS1. Interacts with VSX2. Phosphorylation at Ser-405 significantly enhances the ability to bind the tyrosinase promoter. Phosphorylated at Ser-180 and Ser-516 following KIT signaling, triggering a short live activation: Phosphorylation at Ser-180 and Ser-516 by MAPK and RPS6KA1, respectively, activate the transcription factor activity but also promote ubiquitination and subsequent degradation by the proteasome. Phosphorylated in response to blue light (415nm). Post-translationally, ubiquitinated following phosphorylation at Ser-180, leading to subsequent degradation by the proteasome. Deubiquitinated by USP13, preventing its degradation.

It localises to the nucleus. Its subcellular location is the cytoplasm. Functionally, transcription factor that regulates the expression of genes with essential roles in cell differentiation, proliferation and survival. Binds to M-boxes (5'-TCATGTG-3') and symmetrical DNA sequences (E-boxes) (5'-CACGTG-3') found in the promoters of target genes, such as BCL2 and tyrosinase (TYR). Plays an important role in melanocyte development by regulating the expression of tyrosinase (TYR) and tyrosinase-related protein 1 (TYRP1). Plays a critical role in the differentiation of various cell types, such as neural crest-derived melanocytes, mast cells, osteoclasts and optic cup-derived retinal pigment epithelium. This chain is Microphthalmia-associated transcription factor (Mitf), found in Rattus norvegicus (Rat).